A 477-amino-acid chain; its full sequence is UDP-glycosyltransferase 71K1 (477 aa).

UDP-alpha-D-glucose contacts are provided by residues Ser285, 350–351 (WA), 368–376 (HCGWNSILE), and 390–393 (YAEQ).

Belongs to the UDP-glycosyltransferase family.

Glycosyltransferase that possesses chalcone and flavonol 2'-O-glycosyltransferase activity. Converts phloretin to phlorizin (phloretin 2'-O-glucoside), a potent antioxidant. Possesses glycosyltransferase activity toward quercetin, isoliquiritigenin, butein and caffeic acid. This chain is UDP-glycosyltransferase 71K1, found in Malus domestica (Apple).